A 589-amino-acid chain; its full sequence is Multidrug transporter FLR2 (589 aa).

Residues 50 to 116 (KEEMKQDNQT…SSTKDASKPE (67 aa)) form a disordered region. A compositionally biased stretch (low complexity) spans 56–73 (DNQTSTDSMSTSTQQETD). N-linked (GlcNAc...) asparagine glycosylation is present at asparagine 57. A compositionally biased stretch (basic and acidic residues) spans 107–116 (SSTKDASKPE). N-linked (GlcNAc...) asparagine glycosylation occurs at asparagine 136. The next 12 helical transmembrane spans lie at 143–163 (TFVIVQLMVLTCINYMGSSIY), 179–199 (VVGTLNLSMYVLGYAIGPIIF), 211–231 (MPLYLWTFILFTILQVACALV), 234–254 (IAGLVILRFITGILCSPVLAT), 275–295 (WAVGAVAAPVMAPILGAAMVV), 301–321 (WIFWLMLFMCGATLLSIIFFF), 378–398 (PIILAFDVYIALCYGAFYLFF), 417–437 (GLAFLGFCVGCVFAYTALIIF), 455–475 (LFLILAMCLGWCLPFSLFFFG), 480–500 (IHWILPIIAELFFVLSVFNLF), 516–536 (ASVFAGNGLCRGAFAAAFPLF), and 551–571 (VAWGSTLIGFITVVLSLIPFV).

This sequence belongs to the major facilitator superfamily.

Its subcellular location is the cell membrane. Functionally, multidrug transporter that confers resistance to 5-flucytosine (5-FC) and clotrimazole. Further confers azole drug resistance. Plays direct roles in extrusion of 5-flucytosine and clotrimazole. This chain is Multidrug transporter FLR2, found in Candida glabrata (strain ATCC 2001 / BCRC 20586 / JCM 3761 / NBRC 0622 / NRRL Y-65 / CBS 138) (Yeast).